A 248-amino-acid chain; its full sequence is Deoxyribose-phosphate aldolase (248 aa).

Asp117 serves as the catalytic Proton donor/acceptor. Lys179 functions as the Schiff-base intermediate with acetaldehyde in the catalytic mechanism. Catalysis depends on Lys208, which acts as the Proton donor/acceptor.

This sequence belongs to the DeoC/FbaB aldolase family. DeoC type 1 subfamily.

The protein localises to the cytoplasm. The enzyme catalyses 2-deoxy-D-ribose 5-phosphate = D-glyceraldehyde 3-phosphate + acetaldehyde. The protein operates within carbohydrate degradation; 2-deoxy-D-ribose 1-phosphate degradation; D-glyceraldehyde 3-phosphate and acetaldehyde from 2-deoxy-alpha-D-ribose 1-phosphate: step 2/2. Functionally, catalyzes a reversible aldol reaction between acetaldehyde and D-glyceraldehyde 3-phosphate to generate 2-deoxy-D-ribose 5-phosphate. In Thermotoga petrophila (strain ATCC BAA-488 / DSM 13995 / JCM 10881 / RKU-1), this protein is Deoxyribose-phosphate aldolase.